The primary structure comprises 209 residues: MTENKHRRPVVIGVTGGSGSGKTTVSNAIYNQLSGQSLLILQQDSYYNDQSEMTMAERHAVNYDHPLAFDTDLMIKQIKQLLAYQPIEKPVYDYEQYTRSDKTIHQEPRDVIIVEGVLILDDQRLRDLMDIKVFVDTDDDIRIIRRIQRDIKERGRTLDSVIGQYLATVKPMYHQFVEPTKRYADLIVPEGGENEVAIDLLTTKVRSIL.

16-23 is a binding site for ATP; sequence GGSGSGKT.

The protein belongs to the uridine kinase family.

It localises to the cytoplasm. The catalysed reaction is uridine + ATP = UMP + ADP + H(+). It catalyses the reaction cytidine + ATP = CMP + ADP + H(+). It participates in pyrimidine metabolism; CTP biosynthesis via salvage pathway; CTP from cytidine: step 1/3. It functions in the pathway pyrimidine metabolism; UMP biosynthesis via salvage pathway; UMP from uridine: step 1/1. In Lactiplantibacillus plantarum (strain ATCC BAA-793 / NCIMB 8826 / WCFS1) (Lactobacillus plantarum), this protein is Uridine kinase.